We begin with the raw amino-acid sequence, 311 residues long: Lipoyl synthase (311 aa).

[4Fe-4S] cluster contacts are provided by Cys-58, Cys-63, Cys-69, Cys-84, Cys-88, Cys-91, and Ser-298. In terms of domain architecture, Radical SAM core spans 70-287; the sequence is FGHGTATFMI…EQEALAMGFR (218 aa).

It belongs to the radical SAM superfamily. Lipoyl synthase family. It depends on [4Fe-4S] cluster as a cofactor.

It localises to the cytoplasm. It carries out the reaction [[Fe-S] cluster scaffold protein carrying a second [4Fe-4S](2+) cluster] + N(6)-octanoyl-L-lysyl-[protein] + 2 oxidized [2Fe-2S]-[ferredoxin] + 2 S-adenosyl-L-methionine + 4 H(+) = [[Fe-S] cluster scaffold protein] + N(6)-[(R)-dihydrolipoyl]-L-lysyl-[protein] + 4 Fe(3+) + 2 hydrogen sulfide + 2 5'-deoxyadenosine + 2 L-methionine + 2 reduced [2Fe-2S]-[ferredoxin]. It participates in protein modification; protein lipoylation via endogenous pathway; protein N(6)-(lipoyl)lysine from octanoyl-[acyl-carrier-protein]: step 2/2. Catalyzes the radical-mediated insertion of two sulfur atoms into the C-6 and C-8 positions of the octanoyl moiety bound to the lipoyl domains of lipoate-dependent enzymes, thereby converting the octanoylated domains into lipoylated derivatives. The protein is Lipoyl synthase of Thiobacillus denitrificans (strain ATCC 25259 / T1).